The chain runs to 748 residues: MSFIDPYQHIIVEHQYSHKFTVVVLRATKVTKGTFGDMLDTPDPYVELFISTTPDSRKRTRHFNNDINPVWNETFEFILDPNQENVLEITLMDANYVMDETLGTATFPVSSMKVGEKKEVPFIFNQVTEMILEMSLEVCSCPDLRFSMALCDQEKTFRQQRKENIKENMKKLLGPKKSEGLYSTRDVPVVAILGSGGGFRAMVGFSGVMKALYESGILDCATYIAGLSGSTWYMSTLYSHPDFPEKGPEEINEELMKNVSHNPLLLLTPQKVKRYVESLWKKKSSGQPVTFTDIFGMLIGETLIQNRMSMTLSSLKEKVNAARCPLPLFTCLHVKPDVSELMFADWVEFSPYEIGMAKYGTFMAPDLFGSKFFMGTVVKKYEENPLHFLMGVWGSAFSILFNRVLGVSGSQNKGSTMEEELENITAKHIVSNDSSDSDDEAQGPKGTENEEAEKEYQSDNQASWVHRMLMALVSDSALFNTREGRAGKVHNFMLGLNLNTSYPLSPLRDFSSQDSFDDELDAAVADPDEFERIYEPLDVKSKKIHVVDSGLTFNLPYPLILRPQRGVDLIISFDFSARPSDTSPPFKELLLAEKWAKMNKLPFPKIDPYVFDREGLKECYVFKPKNPDVEKDCPTIIHFVLANINFRKYKAPGVLRETKEEKEIADFDIFDDPESPFSTFNFQYPNQAFKRLHDLMYFNTLNNIDVIKDAIVESIEYRRQNPSRCSVSLSNVEARKFFNKEFLSKPTV.

Residues M1–S178 are phospholipid binding. A Phosphoserine modification is found at S2. The region spanning P6–F122 is the C2 domain. D40, T41, D43, N65, D93, A94, and N95 together coordinate Ca(2+). The 600-residue stretch at S140–N739 folds into the PLA2c domain. Residue S228 is the Nucleophile of the active site. Phosphothreonine is present on T268. The disordered stretch occupies residues K427–S458. A phosphoserine mark is found at S434, S435, and S437. S505 carries the phosphoserine; by MAPK modification. S515 is modified (phosphoserine). Residue K540 forms a Glycyl lysine isopeptide (Lys-Gly) (interchain with G-Cter in SUMO2) linkage. D548 (proton acceptor) is an active-site residue. K605 is covalently cross-linked (Glycyl lysine isopeptide (Lys-Gly) (interchain with G-Cter in SUMO2)). Residues S726 and S728 each carry the phosphoserine modification.

As to quaternary structure, interacts with KAT5. Post-translationally, phosphorylated at both Ser-505 and Ser-726 in response to mitogenic stimuli. Expressed in various organs including uterus, kidney, spleen, liver, heart, lung and brain (at protein level).

It localises to the cytoplasm. Its subcellular location is the golgi apparatus membrane. The protein resides in the nucleus envelope. The enzyme catalyses a 1,2-diacyl-sn-glycero-3-phosphocholine + H2O = a 1-acyl-sn-glycero-3-phosphocholine + a fatty acid + H(+). It carries out the reaction a 1-O-alkyl-2-acyl-sn-glycero-3-phosphocholine + H2O = a 1-O-alkyl-sn-glycero-3-phosphocholine + a fatty acid + H(+). It catalyses the reaction a 1-acyl-sn-glycero-3-phosphocholine + H2O = sn-glycerol 3-phosphocholine + a fatty acid + H(+). The catalysed reaction is 1-hexadecanoyl-2-(5Z,8Z,11Z,14Z-eicosatetraenoyl)-sn-glycero-3-phosphocholine + H2O = 1-hexadecanoyl-sn-glycero-3-phosphocholine + (5Z,8Z,11Z,14Z)-eicosatetraenoate + H(+). The enzyme catalyses 1,2-di-(5Z,8Z,11Z,14Z-eicosatetraenoyl)-sn-glycero-3-phosphocholine + H2O = 1-(5Z,8Z,11Z,14Z-eicosatetraenoyl)-sn-glycero-3-phosphocholine + (5Z,8Z,11Z,14Z)-eicosatetraenoate + H(+). It carries out the reaction 1-octadecanoyl-2-(5Z,8Z,11Z,14Z-eicosatetraenoyl)-sn-glycero-3-phosphocholine + H2O = 1-octadecanoyl-sn-glycero-3-phosphocholine + (5Z,8Z,11Z,14Z)-eicosatetraenoate + H(+). It catalyses the reaction 1-hexadecanoyl-2-(9Z,12Z-octadecadienoyl)-sn-glycero-3-phosphocholine + H2O = (9Z,12Z)-octadecadienoate + 1-hexadecanoyl-sn-glycero-3-phosphocholine + H(+). The catalysed reaction is 1-octadecanoyl-2-(9Z,12Z,15Z-octadecatrienoyl)-sn-glycero-3-phosphocholine + H2O = (9Z,12Z,15Z)-octadecatrienoate + 1-octadecanoyl-sn-glycero-3-phosphocholine + H(+). The enzyme catalyses 1-(5Z,8Z,11Z,14Z-eicosatetraenoyl)-2-hexadecanoyl-sn-glycero-3-phosphocholine + H2O = 1-(5Z,8Z,11Z,14Z-eicosatetraenoyl)-sn-glycero-3-phosphocholine + hexadecanoate + H(+). It carries out the reaction 1-O-hexadecyl-2-(5Z,8Z,11Z,14Z)-eicosatetraenoyl-sn-glycero-3-phosphocholine + H2O = 1-O-hexadecyl-sn-glycero-3-phosphocholine + (5Z,8Z,11Z,14Z)-eicosatetraenoate + H(+). It catalyses the reaction 1,2-di-(9Z-octadecenoyl)-sn-glycero-3-phospho-(1'-sn-glycerol) + H2O = 1-(9Z-octadecenoyl)-sn-glycero-3-phospho-(1'-sn-glycerol) + (9Z)-octadecenoate + H(+). The catalysed reaction is 1-octadecanoyl-2-(5Z,8Z,11Z,14Z-eicosatetraenoyl)-sn-glycero-3-phosphate + H2O = 1-octadecanoyl-sn-glycero-3-phosphate + (5Z,8Z,11Z,14Z)-eicosatetraenoate + H(+). The enzyme catalyses 1-hexadecanoyl-sn-glycero-3-phosphocholine + H2O = sn-glycerol 3-phosphocholine + hexadecanoate + H(+). It carries out the reaction 2-(prostaglandin E2)-sn-glycero-3-phosphoethanolamine + H2O = sn-glycero-3-phosphoethanolamine + prostaglandin E2 + H(+). It catalyses the reaction 2-[(15S)-hydroxy-(5Z,8Z,11Z,13E)-eicosatetraenoyl]-sn-glycero-3-phosphocholine + H2O = (15S)-hydroxy-(5Z,8Z,11Z,13E)-eicosatetraenoate + sn-glycerol 3-phosphocholine + H(+). The catalysed reaction is 2-[(15R)-hydroxy-(5Z,8Z,11Z,13E)-eicosatetraenoyl]-sn-glycero-3-phosphocholine + H2O = (15R)-hydroxy-(5Z,8Z,11Z,13E)-eicosatetraenoate + sn-glycerol 3-phosphocholine + H(+). The enzyme catalyses 2-(prostaglandin E2)-sn-glycero-3-phosphocholine + H2O = prostaglandin E2 + sn-glycerol 3-phosphocholine + H(+). It carries out the reaction 2-[(11R)-hydroxy-(5Z,8Z,12E,14Z)-eicosatetraenoyl]-sn-glycero-3-phosphocholine + H2O = (11R)-hydroxy-(5Z,8Z,12E,14Z)-eicosatetraenoate + sn-glycerol 3-phosphocholine + H(+). It catalyses the reaction 1-(5Z,8Z,11Z,14Z-eicosatetraenoyl)-2-O-hexadecyl-sn-glycero-3-phosphocholine + H2O = 2-O-hexadecyl-sn-glycero-3-phosphocholine + (5Z,8Z,11Z,14Z)-eicosatetraenoate + H(+). The catalysed reaction is 1-octadecanoyl-2-(5Z,8Z,11Z,14Z-eicosatetraenoyl)-sn-glycero-3-phosphocholine + glycerol = 1-(5Z,8Z,11Z,14Z-eicosatetraenoyl)-glycerol + 1-octadecanoyl-sn-glycero-3-phosphocholine. The enzyme catalyses 1-octadecanoyl-2-(9Z,12Z,15Z-octadecatrienoyl)-sn-glycero-3-phosphocholine + glycerol = 1-(9Z,12Z,15Z-octadecatrienoyl)-glycerol + 1-octadecanoyl-sn-glycero-3-phosphocholine. It participates in membrane lipid metabolism; glycerophospholipid metabolism. Its pathway is lipid metabolism; arachidonate metabolism. The protein operates within lipid metabolism; prostaglandin biosynthesis. It functions in the pathway lipid metabolism; leukotriene B4 biosynthesis. Its activity is regulated as follows. Activated by cytosolic calcium, which is necessary for binding to membrane lipids. Activated by phosphorylation in response to mitogenic stimuli. Stimulated by agonists such as ATP and thrombin. Has primarily calcium-dependent phospholipase and lysophospholipase activities, with a major role in membrane lipid remodeling and biosynthesis of lipid mediators of the inflammatory response. Plays an important role in embryo implantation and parturition through its ability to trigger prostanoid production. Preferentially hydrolyzes the ester bond of the fatty acyl group attached at sn-2 position of phospholipids (phospholipase A2 activity). Selectively hydrolyzes sn-2 arachidonoyl group from membrane phospholipids, providing the precursor for eicosanoid biosynthesis via the cyclooxygenase pathway. In an alternative pathway of eicosanoid biosynthesis, hydrolyzes sn-2 fatty acyl chain of eicosanoid lysophopholipids to release free bioactive eicosanoids. Hydrolyzes the ester bond of the fatty acyl group attached at sn-1 position of phospholipids (phospholipase A1 activity) only if an ether linkage rather than an ester linkage is present at the sn-2 position. This hydrolysis is not stereospecific. Has calcium-independent phospholipase A2 and lysophospholipase activities in the presence of phosphoinositides. Has O-acyltransferase activity. Catalyzes the transfer of fatty acyl chains from phospholipids to a primary hydroxyl group of glycerol (sn-1 or sn-3), potentially contributing to monoacylglycerol synthesis. The polypeptide is Cytosolic phospholipase A2 (Pla2g4a) (Mus musculus (Mouse)).